Reading from the N-terminus, the 567-residue chain is MSVKIDKRAYAEMFGPTVGDRMRLADTELWLEVEKDYTIYGEEVKFGGGKVIRDGMGQGQGVASEVADTVITNALIVDHWGIVKADIGIKGGYISAIGKAGNPDIQPGVEIAIGAGTEVIAGEGMIVTAGGIDTHIHFICPQQIEEALMSGVTTMIGGGTGPATGTFATTCTPGPWHIHRMLQSADAFPMNLGFLGKGNASLPQPLREQVEAGVVGLKLHEDWGTTPAAIDNCLSIAEEMDVQVAIHSDTLNESGFVETTLGAFKGRTIHTFHTEGAGGGHAPDIIRAAGYPNVLPSSTNPTRPFTINTIDEHLDMLMVCHHLDPAIAEDVAFAESRIRRETIAAEDILHDLGAFAMMSSDSQAMGRVGEVVIRTWQTAHKMKVQRGPLPEDSARNDNFRIKRYIAKYTINPALTHGIAHVVGSIEVGKLADLVLWRPAFFGVKPSTILKGGMIAAAVMGDANASIPTPQPVHYRSMFGSYGGALQTSVTFVSQAALQNPEVAALQLKKPLVAVKGTRGVKKADMVHNGWMPEIDVDPETYEVRADGMVLSCEPAEILPLAQRYFLF.

The Urease domain occupies 130–567 (GGIDTHIHFI…LPLAQRYFLF (438 aa)). Residues histidine 135, histidine 137, and lysine 218 each coordinate Ni(2+). An N6-carboxylysine modification is found at lysine 218. Substrate is bound at residue histidine 220. 2 residues coordinate Ni(2+): histidine 247 and histidine 273. Histidine 321 serves as the catalytic Proton donor. Aspartate 361 is a binding site for Ni(2+).

Belongs to the metallo-dependent hydrolases superfamily. Urease alpha subunit family. In terms of assembly, heterotrimer of UreA (gamma), UreB (beta) and UreC (alpha) subunits. Three heterotrimers associate to form the active enzyme. Ni cation serves as cofactor. Post-translationally, carboxylation allows a single lysine to coordinate two nickel ions.

It is found in the cytoplasm. It catalyses the reaction urea + 2 H2O + H(+) = hydrogencarbonate + 2 NH4(+). It participates in nitrogen metabolism; urea degradation; CO(2) and NH(3) from urea (urease route): step 1/1. The polypeptide is Urease subunit alpha (Methylobacillus flagellatus (strain ATCC 51484 / DSM 6875 / VKM B-1610 / KT)).